The sequence spans 345 residues: Anthranilate phosphoribosyltransferase 1 (345 aa).

5-phospho-alpha-D-ribose 1-diphosphate is bound by residues Gly86, 89–90, Thr94, 96–99, 114–122, and Ser126; these read GD, NIST, and KHGGRGVSS. Position 86 (Gly86) interacts with anthranilate. Ser98 is a Mg(2+) binding site. Residue Arg172 coordinates anthranilate. Residues Asp231 and Glu232 each coordinate Mg(2+).

The protein belongs to the anthranilate phosphoribosyltransferase family. In terms of assembly, homodimer. Mg(2+) is required as a cofactor.

It catalyses the reaction N-(5-phospho-beta-D-ribosyl)anthranilate + diphosphate = 5-phospho-alpha-D-ribose 1-diphosphate + anthranilate. The protein operates within amino-acid biosynthesis; L-tryptophan biosynthesis; L-tryptophan from chorismate: step 2/5. In terms of biological role, catalyzes the transfer of the phosphoribosyl group of 5-phosphorylribose-1-pyrophosphate (PRPP) to anthranilate to yield N-(5'-phosphoribosyl)-anthranilate (PRA). This chain is Anthranilate phosphoribosyltransferase 1, found in Ralstonia nicotianae (strain ATCC BAA-1114 / GMI1000) (Ralstonia solanacearum).